The following is a 129-amino-acid chain: Large ribosomal subunit protein uL22 (129 aa).

This sequence belongs to the universal ribosomal protein uL22 family. Part of the 50S ribosomal subunit.

In terms of biological role, this protein binds specifically to 23S rRNA; its binding is stimulated by other ribosomal proteins, e.g. L4, L17, and L20. It is important during the early stages of 50S assembly. It makes multiple contacts with different domains of the 23S rRNA in the assembled 50S subunit and ribosome. The globular domain of the protein is located near the polypeptide exit tunnel on the outside of the subunit, while an extended beta-hairpin is found that lines the wall of the exit tunnel in the center of the 70S ribosome. In Agrobacterium fabrum (strain C58 / ATCC 33970) (Agrobacterium tumefaciens (strain C58)), this protein is Large ribosomal subunit protein uL22.